Consider the following 1237-residue polypeptide: Mediator of RNA polymerase II transcription subunit 5 (1237 aa).

Disordered stretches follow at residues 1109-1131 (DDEP…TSNA) and 1202-1226 (HGAQ…ADSG). A compositionally biased stretch (low complexity) spans 1119–1131 (HAAANATSHTSNA).

Belongs to the Mediator complex subunit 5 family. As to quaternary structure, component of the Mediator complex.

Its subcellular location is the nucleus. In terms of biological role, component of the Mediator complex, a coactivator involved in the regulated transcription of nearly all RNA polymerase II-dependent genes. Mediator functions as a bridge to convey information from gene-specific regulatory proteins to the basal RNA polymerase II transcription machinery. Mediator is recruited to promoters by direct interactions with regulatory proteins and serves as a scaffold for the assembly of a functional preinitiation complex with RNA polymerase II and the general transcription factors. This Mycosarcoma maydis (Corn smut fungus) protein is Mediator of RNA polymerase II transcription subunit 5 (NUT1).